Here is a 482-residue protein sequence, read N- to C-terminus: CBL-interacting serine/threonine-protein kinase 23 (482 aa).

Over residues 1–25 (MASRTTPSRSTPSRSTPSGSSSGGR) the composition is skewed to low complexity. Residues 1 to 29 (MASRTTPSRSTPSRSTPSGSSSGGRTRVG) form a disordered region. In terms of domain architecture, Protein kinase spans 31-286 (YELGRTLGEG…FAEVIENEWF (256 aa)). Residues 37-45 (LGEGTFAKV) and Lys60 contribute to the ATP site. The active-site Proton acceptor is the Asp154. The interval 172–201 (DFGLSALPQQVREDGLLHTTCGTPNYVAPE) is activation loop. Ser176 is modified (phosphoserine). At Thr190 the chain carries Phosphothreonine. Residues 328 to 352 (KTPVTMNAFELISTSQGLNLGSLFE) form the NAF domain. The PPI stretch occupies residues 359-388 (KRKTRFTSKSSANEIVTKIEAAAAPMGFDV). The segment at 459–482 (KEEGTDGGGTNGAMANRTIAKQST) is disordered.

Belongs to the protein kinase superfamily. CAMK Ser/Thr protein kinase family. SNF1 subfamily. In terms of assembly, part of a K(+)-channel calcium-sensing kinase/phosphatase complex composed by a calcium sensor CBL (CBL1, CBL2, CBL3 or CBL9), a kinase CIPK (CIPK6, CIPK16 or CIPK23), a phosphatase PP2C (AIP1) and a K(+)-channel (AKT1). Interacts with AKT1, CBL1, CBL2, CBL3, CBL5, CBL8, CBL9 and NRT1.1. The cofactor is Mn(2+). In terms of processing, autophosphorylated. As to expression, in seedlings, mostly in vascular bundles, and in roots, especially in cortex and endodermis cells. In adult plants, mostly expressed in flowers, and, to a lower extent, in roots, leaves, stems and siliques, particularly in vascular tissues. Also detected in guard cells and root hairs.

The protein resides in the cell membrane. It carries out the reaction L-seryl-[protein] + ATP = O-phospho-L-seryl-[protein] + ADP + H(+). It catalyses the reaction L-threonyl-[protein] + ATP = O-phospho-L-threonyl-[protein] + ADP + H(+). In terms of biological role, CIPK serine-threonine protein kinases interact with CBL proteins. Binding of a CBL protein to the regulatory NAF domain of CIPK protein leads to activation of the kinase in a calcium-dependent manner. Downstream of CBL1, CBL2, CBL3 and CBL9, regulates by phosphorylation the K(+) conductance and uptake of AKT1 in low K(+) condition, in response to calcium signaling and during the stomatal opening regulation by monitoring the turgor pressure in guard cells. In response to low nitrate concentration, phosphorylates NRT1.1, switching it from a low-affinity nitrate transporter to a high-affinity transporter. Confers tolerance to low potassium conditions. Involved in drought sensitivity and leaf transpiration. This chain is CBL-interacting serine/threonine-protein kinase 23 (CIPK23), found in Arabidopsis thaliana (Mouse-ear cress).